The following is a 99-amino-acid chain: NADH-quinone oxidoreductase subunit K (99 aa).

The next 3 membrane-spanning stretches (helical) occupy residues 3–23, 28–48, and 62–82; these read PMYY…GVLL, IIVF…LVTF, and FFVM…IVAI.

This sequence belongs to the complex I subunit 4L family. As to quaternary structure, NDH-1 is composed of 14 different subunits. Subunits NuoA, H, J, K, L, M, N constitute the membrane sector of the complex.

It is found in the cell membrane. The enzyme catalyses a quinone + NADH + 5 H(+)(in) = a quinol + NAD(+) + 4 H(+)(out). Functionally, NDH-1 shuttles electrons from NADH, via FMN and iron-sulfur (Fe-S) centers, to quinones in the respiratory chain. The immediate electron acceptor for the enzyme in this species is believed to be a menaquinone. Couples the redox reaction to proton translocation (for every two electrons transferred, four hydrogen ions are translocated across the cytoplasmic membrane), and thus conserves the redox energy in a proton gradient. This Acidothermus cellulolyticus (strain ATCC 43068 / DSM 8971 / 11B) protein is NADH-quinone oxidoreductase subunit K.